We begin with the raw amino-acid sequence, 582 residues long: Spermatogenesis-associated protein 7 homolog (582 aa).

Disordered regions lie at residues 167–192 and 251–289; these read LMSG…CDRR and RKDF…EVNI. Polar residues-rich tracts occupy residues 169–181 and 262–274; these read SGTQ…SPSR and ETQT…NSEL.

Found in a complex with CFAP410, NEK1 and SPATA7. Interacts with NEK1. Interacts with RPGRIP1. Interacts with RPGR. Interacts with NPHP4. Interacts with NPHP1. Interacts with AHI1. In terms of tissue distribution, expressed in the retina (at protein level). Expressed in the choroid region and retinal pigment endothelium, within the photoreceptor layer (at protein level).

It is found in the cytoplasm. The protein resides in the cytoskeleton. Its subcellular location is the cilium axoneme. It localises to the cilium basal body. The protein localises to the cell projection. It is found in the cilium. The protein resides in the photoreceptor outer segment. In terms of biological role, involved in the maintenance of both rod and cone photoreceptor cells. Required for photoreceptor-specific localization of proximal connecting cilium (CC) proteins RPGR, AHI1, NPHP1, NPHP4, and RPGRIP1 at the distal CC, a photoreceptor-specific extension of the primary cilium transition zone. Maintenance of protein localization at the photoreceptor-specific distal CC is essential for normal microtubule stability and to prevent photoreceptor degeneration. This Mus musculus (Mouse) protein is Spermatogenesis-associated protein 7 homolog (Spata7).